Reading from the N-terminus, the 416-residue chain is D-amino acid dehydrogenase (416 aa).

Residue Val3–Trp17 coordinates FAD.

It belongs to the DadA oxidoreductase family. The cofactor is FAD.

It carries out the reaction a D-alpha-amino acid + A + H2O = a 2-oxocarboxylate + AH2 + NH4(+). Its pathway is amino-acid degradation; D-alanine degradation; NH(3) and pyruvate from D-alanine: step 1/1. Oxidative deamination of D-amino acids. The sequence is that of D-amino acid dehydrogenase from Rhizorhabdus wittichii (strain DSM 6014 / CCUG 31198 / JCM 15750 / NBRC 105917 / EY 4224 / RW1) (Sphingomonas wittichii).